A 171-amino-acid polypeptide reads, in one-letter code: S-ribosylhomocysteine lyase (171 aa).

Positions 54, 58, and 128 each coordinate Fe cation.

This sequence belongs to the LuxS family. As to quaternary structure, homodimer. Requires Fe cation as cofactor.

The enzyme catalyses S-(5-deoxy-D-ribos-5-yl)-L-homocysteine = (S)-4,5-dihydroxypentane-2,3-dione + L-homocysteine. Involved in the synthesis of autoinducer 2 (AI-2) which is secreted by bacteria and is used to communicate both the cell density and the metabolic potential of the environment. The regulation of gene expression in response to changes in cell density is called quorum sensing. Catalyzes the transformation of S-ribosylhomocysteine (RHC) to homocysteine (HC) and 4,5-dihydroxy-2,3-pentadione (DPD). The chain is S-ribosylhomocysteine lyase from Pectobacterium atrosepticum (strain SCRI 1043 / ATCC BAA-672) (Erwinia carotovora subsp. atroseptica).